Here is a 104-residue protein sequence, read N- to C-terminus: Nucleoid-associated protein Ccon26_18480 (104 aa).

Positions 16 to 34 are enriched in basic and acidic residues; it reads DVQKQAKQMEEESKNKEFG. The disordered stretch occupies residues 16–38; the sequence is DVQKQAKQMEEESKNKEFGAKSG.

Belongs to the YbaB/EbfC family. In terms of assembly, homodimer.

The protein localises to the cytoplasm. Its subcellular location is the nucleoid. Binds to DNA and alters its conformation. May be involved in regulation of gene expression, nucleoid organization and DNA protection. In Campylobacter concisus (strain 13826), this protein is Nucleoid-associated protein Ccon26_18480.